Reading from the N-terminus, the 114-residue chain is Ribosome-binding factor A (114 aa).

Belongs to the RbfA family. As to quaternary structure, monomer. Binds 30S ribosomal subunits, but not 50S ribosomal subunits or 70S ribosomes.

It localises to the cytoplasm. Its function is as follows. One of several proteins that assist in the late maturation steps of the functional core of the 30S ribosomal subunit. Associates with free 30S ribosomal subunits (but not with 30S subunits that are part of 70S ribosomes or polysomes). Required for efficient processing of 16S rRNA. May interact with the 5'-terminal helix region of 16S rRNA. This is Ribosome-binding factor A from Macrococcus caseolyticus (strain JCSC5402) (Macrococcoides caseolyticum).